A 615-amino-acid chain; its full sequence is Elongation factor 4 (615 aa).

A tr-type G domain is found at 14-200; that stretch reads QQIRNFCIIA…KVAELIPAPT (187 aa). GTP contacts are provided by residues 26 to 31 and 147 to 150; these read DHGKST and NKID.

It belongs to the TRAFAC class translation factor GTPase superfamily. Classic translation factor GTPase family. LepA subfamily.

The protein localises to the cell membrane. It catalyses the reaction GTP + H2O = GDP + phosphate + H(+). Required for accurate and efficient protein synthesis under certain stress conditions. May act as a fidelity factor of the translation reaction, by catalyzing a one-codon backward translocation of tRNAs on improperly translocated ribosomes. Back-translocation proceeds from a post-translocation (POST) complex to a pre-translocation (PRE) complex, thus giving elongation factor G a second chance to translocate the tRNAs correctly. Binds to ribosomes in a GTP-dependent manner. The polypeptide is Elongation factor 4 (Corynebacterium diphtheriae (strain ATCC 700971 / NCTC 13129 / Biotype gravis)).